A 284-amino-acid polypeptide reads, in one-letter code: Nucleotide-binding protein CPS_4546 (284 aa).

8–15 is an ATP binding site; that stretch reads GRSGSGKS. 56–59 lines the GTP pocket; sequence DVRN.

This sequence belongs to the RapZ-like family.

Functionally, displays ATPase and GTPase activities. This Colwellia psychrerythraea (strain 34H / ATCC BAA-681) (Vibrio psychroerythus) protein is Nucleotide-binding protein CPS_4546.